Here is a 208-residue protein sequence, read N- to C-terminus: Fucoxanthin-chlorophyll a-c binding protein, chloroplastic (208 aa).

A chloroplast-targeting transit peptide spans 1–31 (MMTLASLPSTAIAGLASAAPKVQPRMAANDE). A helical transmembrane segment spans residues 102 to 118 (IPQLPYWLWIVMTIGIG).

This sequence belongs to the fucoxanthin chlorophyll protein family. As to quaternary structure, the LHC complex of chromophytic algae is composed of fucoxanthin, chlorophyll A and C bound non-covalently by fucoxanthin chlorophyll proteins (FCPs). The ratio of pigments in this LHC is; fucoxanthin: chlorophyll C: chlorophyll A; (0.6-1): (0.1-0.3): (1).

The protein resides in the plastid. It is found in the chloroplast thylakoid membrane. In terms of biological role, the light-harvesting complex (LHC) functions as a light receptor, it captures and delivers excitation energy to photosystems with which it is closely associated. Energy is transferred from the carotenoid and chlorophyll C (or B) to chlorophyll A and the photosynthetic reaction centers where it is used to synthesize ATP and reducing power. The protein is Fucoxanthin-chlorophyll a-c binding protein, chloroplastic (FCP) of Isochrysis galbana (Marine planktonic alga).